A 154-amino-acid polypeptide reads, in one-letter code: Ribonuclease H (154 aa).

An RNase H type-1 domain is found at M1 to N142. 4 residues coordinate Mg(2+): D10, E48, D70, and D134.

It belongs to the RNase H family. In terms of assembly, monomer. The cofactor is Mg(2+).

Its subcellular location is the cytoplasm. The catalysed reaction is Endonucleolytic cleavage to 5'-phosphomonoester.. Functionally, endonuclease that specifically degrades the RNA of RNA-DNA hybrids. This chain is Ribonuclease H, found in Yersinia pestis bv. Antiqua (strain Antiqua).